Reading from the N-terminus, the 538-residue chain is Putative cysteine ligase BshC (538 aa).

The stretch at 462–533 forms a coiled coil; the sequence is LDHLEKRLLK…DPLESNFKIL (72 aa).

This sequence belongs to the BshC family.

This is Putative cysteine ligase BshC from Christiangramia forsetii (strain DSM 17595 / CGMCC 1.15422 / KT0803) (Gramella forsetii).